Consider the following 391-residue polypeptide: Chalcone synthase (391 aa).

C164 is a catalytic residue.

This sequence belongs to the thiolase-like superfamily. Chalcone/stilbene synthases family.

The enzyme catalyses (E)-4-coumaroyl-CoA + 3 malonyl-CoA + 3 H(+) = 2',4,4',6'-tetrahydroxychalcone + 3 CO2 + 4 CoA. It participates in secondary metabolite biosynthesis; flavonoid biosynthesis. The primary product of this enzyme is 4,2',4',6'-tetrahydroxychalcone (also termed naringenin-chalcone or chalcone) which can under specific conditions spontaneously isomerize into naringenin. The polypeptide is Chalcone synthase (CHS) (Dianthus caryophyllus (Carnation)).